The sequence spans 192 residues: Threonylcarbamoyl-AMP synthase (192 aa).

The 188-residue stretch at 5–192 (TTSVAEAAHC…DATTGRVIRD (188 aa)) folds into the YrdC-like domain.

It belongs to the SUA5 family. TsaC subfamily.

The protein localises to the cytoplasm. It catalyses the reaction L-threonine + hydrogencarbonate + ATP = L-threonylcarbamoyladenylate + diphosphate + H2O. Functionally, required for the formation of a threonylcarbamoyl group on adenosine at position 37 (t(6)A37) in tRNAs that read codons beginning with adenine. Catalyzes the conversion of L-threonine, HCO(3)(-)/CO(2) and ATP to give threonylcarbamoyl-AMP (TC-AMP) as the acyladenylate intermediate, with the release of diphosphate. In Acinetobacter baylyi (strain ATCC 33305 / BD413 / ADP1), this protein is Threonylcarbamoyl-AMP synthase.